The primary structure comprises 1108 residues: Lon protease homolog, mitochondrial (1108 aa).

A mitochondrion-targeting transit peptide spans 1–62; that stretch reads MLRGQSLPWR…RAFSTSSIRR (62 aa). 2 disordered regions span residues 24 to 192 and 299 to 318; these read PLLP…QKPS and LPPG…PEKK. Over residues 36–53 the composition is skewed to low complexity; sequence RSNLSISRLSRSPSLSPR. Basic and acidic residues-rich tracts occupy residues 78-103 and 119-146; these read EQKD…DSTG and KVAG…KSDP. Residues 161 to 171 are compositionally biased toward polar residues; it reads SDTKSSASNGG. Composition is skewed to basic and acidic residues over residues 174-188 and 309-318; these read DGGR…DRAL and NTEDKAPEKK. In terms of domain architecture, Lon N-terminal spans 200–452; it reads VMAIPIAKRP…KALVVLKKEL (253 aa). 605–612 serves as a coordination point for ATP; sequence GPPGVGKT. The span at 821 to 855 shows a compositional bias: basic and acidic residues; the sequence is DKALTDEGKAAQEESKKETEEGDPKDPPADPEKST. A disordered region spans residues 821-862; the sequence is DKALTDEGKAAQEESKKETEEGDPKDPPADPEKSTTETPRLA. The Lon proteolytic domain occupies 895 to 1081; it reads TFPPGVTMGL…SEVFNILFAE (187 aa). Residues serine 987 and lysine 1030 contribute to the active site.

The protein belongs to the peptidase S16 family. Homohexamer or homoheptamer. Organized in a ring with a central cavity.

The protein localises to the mitochondrion matrix. The catalysed reaction is Hydrolysis of proteins in presence of ATP.. ATP-dependent serine protease that mediates the selective degradation of misfolded, unassembled or oxidatively damaged polypeptides as well as certain short-lived regulatory proteins in the mitochondrial matrix. May also have a chaperone function in the assembly of inner membrane protein complexes. Participates in the regulation of mitochondrial gene expression and in the maintenance of the integrity of the mitochondrial genome. Binds to mitochondrial DNA in a site-specific manner. The protein is Lon protease homolog, mitochondrial (pim1) of Aspergillus fumigatus (strain ATCC MYA-4609 / CBS 101355 / FGSC A1100 / Af293) (Neosartorya fumigata).